The following is a 317-amino-acid chain: Peptidyl-prolyl cis-trans isomerase CYP26-2, chloroplastic (317 aa).

The tract at residues 1–37 (MMQPNAKLLSPSAKFLPSPIEPPQHNRRTTVGAPPSL) is disordered. The region spanning 95–311 (FIDVSIDGEP…SKVVVTNCGL (217 aa)) is the PPIase cyclophilin-type domain.

This sequence belongs to the cyclophilin-type PPIase family. Ubiquitous. Lower levels of expression in roots.

The protein localises to the plastid. It is found in the chloroplast thylakoid. The enzyme catalyses [protein]-peptidylproline (omega=180) = [protein]-peptidylproline (omega=0). In terms of biological role, PPIases accelerate the folding of proteins. It catalyzes the cis-trans isomerization of proline imidic peptide bonds in oligopeptides. In Arabidopsis thaliana (Mouse-ear cress), this protein is Peptidyl-prolyl cis-trans isomerase CYP26-2, chloroplastic (CYP26-2).